The primary structure comprises 224 residues: Glutathione S-transferase U4 (224 aa).

The region spanning 6–85 (EDVKLLGFWA…YIDQIWKNNP (80 aa)) is the GST N-terminal domain. Residues 16–17 (SP), 42–43 (NK), 56–57 (KV), and 69–70 (ES) contribute to the glutathione site. In terms of domain architecture, GST C-terminal spans 90–217 (DPYEKAMALF…EEQIEHMKKV (128 aa)). Residue Thr-151 is modified to Phosphothreonine.

Belongs to the GST superfamily. Tau family.

It is found in the cytoplasm. The protein localises to the cytosol. It carries out the reaction RX + glutathione = an S-substituted glutathione + a halide anion + H(+). Its function is as follows. May be involved in the conjugation of reduced glutathione to a wide number of exogenous and endogenous hydrophobic electrophiles and have a detoxification role against certain herbicides. This chain is Glutathione S-transferase U4 (GSTU4), found in Arabidopsis thaliana (Mouse-ear cress).